The sequence spans 34 residues: Photosystem II reaction center protein M (34 aa).

A helical membrane pass occupies residues 5-25; it reads ILAFIAIVLFISVPTAFLLII.

It belongs to the PsbM family. In terms of assembly, PSII is composed of 1 copy each of membrane proteins PsbA, PsbB, PsbC, PsbD, PsbE, PsbF, PsbH, PsbI, PsbJ, PsbK, PsbL, PsbM, PsbT, PsbX, PsbY, PsbZ, Psb30/Ycf12, at least 3 peripheral proteins of the oxygen-evolving complex and a large number of cofactors. It forms dimeric complexes.

The protein resides in the plastid. It is found in the chloroplast thylakoid membrane. One of the components of the core complex of photosystem II (PSII). PSII is a light-driven water:plastoquinone oxidoreductase that uses light energy to abstract electrons from H(2)O, generating O(2) and a proton gradient subsequently used for ATP formation. It consists of a core antenna complex that captures photons, and an electron transfer chain that converts photonic excitation into a charge separation. This subunit is found at the monomer-monomer interface. The protein is Photosystem II reaction center protein M of Cycas taitungensis (Prince sago).